The primary structure comprises 479 residues: Adenosylhomocysteinase (479 aa).

Residues T65, D145, and E205 each contribute to the substrate site. 206–208 is a binding site for NAD(+); it reads TTT. Substrate-binding residues include K235 and D239. Residues N240, 269–274, E292, N327, 348–350, and N393 each bind NAD(+); these read GYGDVG and IGH.

The protein belongs to the adenosylhomocysteinase family. The cofactor is NAD(+).

Its subcellular location is the cytoplasm. It catalyses the reaction S-adenosyl-L-homocysteine + H2O = L-homocysteine + adenosine. Its pathway is amino-acid biosynthesis; L-homocysteine biosynthesis; L-homocysteine from S-adenosyl-L-homocysteine: step 1/1. Its function is as follows. May play a key role in the regulation of the intracellular concentration of adenosylhomocysteine. The polypeptide is Adenosylhomocysteinase (Janthinobacterium sp. (strain Marseille) (Minibacterium massiliensis)).